Reading from the N-terminus, the 3462-residue chain is DNA-directed RNA polymerase subunit beta'' (3462 aa).

Positions 263, 335, 342, and 345 each coordinate Zn(2+). The segment at 541–1085 is insert-1; the sequence is KIDDQELSSV…PNKIFSSNLF (545 aa). The segment at 1528 to 1585 is insert-2; it reads PQSANERKQILKKARQKLRLFPLNLNEKKNRFSSVTLDLLRDQTTLHKMQSCGEAESG. The segment at 1602 to 1699 is insert-3; it reads KKITEIFTFC…FSKQMGNRLL (98 aa). Residues 1938–2168 are insert-4; the sequence is LKNKMNQSFS…SQASWILETN (231 aa). Positions 2320–2870 are insert-5; it reads NLVSGKLNFL…KKKIAKEGAF (551 aa). Positions 2972 to 3196 are insert-6; sequence SKSQRGWFHN…IGQLLRYGKE (225 aa).

It belongs to the RNA polymerase beta' chain family. RpoC2 subfamily. As to quaternary structure, in plastids the minimal PEP RNA polymerase catalytic core is composed of four subunits: alpha, beta, beta', and beta''. When a (nuclear-encoded) sigma factor is associated with the core the holoenzyme is formed, which can initiate transcription. Zn(2+) serves as cofactor.

The protein resides in the plastid. It localises to the chloroplast. It catalyses the reaction RNA(n) + a ribonucleoside 5'-triphosphate = RNA(n+1) + diphosphate. DNA-dependent RNA polymerase catalyzes the transcription of DNA into RNA using the four ribonucleoside triphosphates as substrates. This chain is DNA-directed RNA polymerase subunit beta'', found in Tupiella akineta (Green alga).